Here is a 1330-residue protein sequence, read N- to C-terminus: Major capsid protein (1330 aa).

This sequence belongs to the herpesviridae major capsid protein family. Homomultimer. Makes the hexons and eleven out of twelve pentons. Interacts with triplex proteins 1/TRX1 and 2/TRX2; adjacent capsomers are linked together in groups of three by triplexes, heterotrimeric complexes composed of one molecule of TRX1 and two molecules of TRX2. Interacts with scaffold protein; this interaction allows efficient MCP transport to the host nucleus. Interacts with capsid vertex component 2/CVC2. Interacts with the small capsomere-interacting protein/SCP.

It localises to the virion. The protein resides in the host nucleus. Its function is as follows. Self-assembles to form an icosahedral capsid with a T=16 symmetry, about 200 nm in diameter, and consisting of 150 hexons and 12 pentons (total of 162 capsomers). Hexons form the edges and faces of the capsid and are each composed of six MCP molecules. In contrast, one penton is found at each of the 12 vertices. Eleven of the pentons are MCP pentamers, while the last vertex is occupied by the portal complex. The capsid is surrounded by a layer of proteinaceous material designated the tegument which, in turn, is enclosed in an envelope of host cell-derived lipids containing virus-encoded glycoproteins. The sequence is that of Major capsid protein from Sus scrofa (Pig).